Here is a 557-residue protein sequence, read N- to C-terminus: Formate--tetrahydrofolate ligase (557 aa).

67–74 (TPAGEGKS) is an ATP binding site.

The protein belongs to the formate--tetrahydrofolate ligase family.

It carries out the reaction (6S)-5,6,7,8-tetrahydrofolate + formate + ATP = (6R)-10-formyltetrahydrofolate + ADP + phosphate. It participates in one-carbon metabolism; tetrahydrofolate interconversion. This chain is Formate--tetrahydrofolate ligase, found in Latilactobacillus sakei subsp. sakei (strain 23K) (Lactobacillus sakei subsp. sakei).